A 90-amino-acid chain; its full sequence is Probable Fe(2+)-trafficking protein (90 aa).

The protein belongs to the Fe(2+)-trafficking protein family.

Its function is as follows. Could be a mediator in iron transactions between iron acquisition and iron-requiring processes, such as synthesis and/or repair of Fe-S clusters in biosynthetic enzymes. This chain is Probable Fe(2+)-trafficking protein, found in Thioalkalivibrio sulfidiphilus (strain HL-EbGR7).